We begin with the raw amino-acid sequence, 434 residues long: Probable phosphoglucosamine mutase (434 aa).

S91 acts as the Phosphoserine intermediate in catalysis. The Mg(2+) site is built by S91, D229, D231, and D233. S91 is subject to Phosphoserine.

This sequence belongs to the phosphohexose mutase family. Mg(2+) serves as cofactor. In terms of processing, activated by phosphorylation.

It catalyses the reaction alpha-D-glucosamine 1-phosphate = D-glucosamine 6-phosphate. In terms of biological role, catalyzes the conversion of glucosamine-6-phosphate to glucosamine-1-phosphate. This chain is Probable phosphoglucosamine mutase, found in Methanosarcina barkeri (strain Fusaro / DSM 804).